The primary structure comprises 240 residues: Protein GUCD1 (240 aa).

The sequence is that of Protein GUCD1 (GUCD1) from Homo sapiens (Human).